The sequence spans 335 residues: tRNA N6-adenosine threonylcarbamoyltransferase (335 aa).

Residues histidine 110 and histidine 114 each contribute to the Fe cation site. Residues 132–136, aspartate 165, glycine 178, and asparagine 271 contribute to the substrate site; that span reads LVSGG. Residue aspartate 299 participates in Fe cation binding.

The protein belongs to the KAE1 / TsaD family. Fe(2+) is required as a cofactor.

It localises to the cytoplasm. It catalyses the reaction L-threonylcarbamoyladenylate + adenosine(37) in tRNA = N(6)-L-threonylcarbamoyladenosine(37) in tRNA + AMP + H(+). In terms of biological role, required for the formation of a threonylcarbamoyl group on adenosine at position 37 (t(6)A37) in tRNAs that read codons beginning with adenine. Is involved in the transfer of the threonylcarbamoyl moiety of threonylcarbamoyl-AMP (TC-AMP) to the N6 group of A37, together with TsaE and TsaB. TsaD likely plays a direct catalytic role in this reaction. This is tRNA N6-adenosine threonylcarbamoyltransferase from Campylobacter jejuni subsp. jejuni serotype O:23/36 (strain 81-176).